A 147-amino-acid polypeptide reads, in one-letter code: Myoglobin (147 aa).

Residues 2–141 (ADFDAVLKCW…IIADLEANYK (140 aa)) enclose the Globin domain. His60 is a binding site for nitrite. Residue His60 coordinates O2. Position 89 (His89) interacts with heme b.

It belongs to the globin family. In terms of assembly, monomeric.

The protein resides in the cytoplasm. The protein localises to the sarcoplasm. The catalysed reaction is Fe(III)-heme b-[protein] + nitric oxide + H2O = Fe(II)-heme b-[protein] + nitrite + 2 H(+). The enzyme catalyses H2O2 + AH2 = A + 2 H2O. In terms of biological role, monomeric heme protein which primary function is to store oxygen and facilitate its diffusion within muscle tissues. Reversibly binds oxygen through a pentacoordinated heme iron and enables its timely and efficient release as needed during periods of heightened demand. Depending on the oxidative conditions of tissues and cells, and in addition to its ability to bind oxygen, it also has a nitrite reductase activity whereby it regulates the production of bioactive nitric oxide. Under stress conditions, like hypoxia and anoxia, it also protects cells against reactive oxygen species thanks to its pseudoperoxidase activity. The chain is Myoglobin (mb) from Thunnus alalunga (Albacore).